A 264-amino-acid chain; its full sequence is Thymidylate synthase (264 aa).

Residue R21 coordinates dUMP. H51 serves as a coordination point for (6R)-5,10-methylene-5,6,7,8-tetrahydrofolate. Residue 126–127 coordinates dUMP; it reads RR. C146 acts as the Nucleophile in catalysis. DUMP contacts are provided by residues 166–169, N177, and 207–209; these read RSGD and HLY. (6R)-5,10-methylene-5,6,7,8-tetrahydrofolate is bound at residue D169. Residue A263 participates in (6R)-5,10-methylene-5,6,7,8-tetrahydrofolate binding.

It belongs to the thymidylate synthase family. Bacterial-type ThyA subfamily. Homodimer.

The protein resides in the cytoplasm. It catalyses the reaction dUMP + (6R)-5,10-methylene-5,6,7,8-tetrahydrofolate = 7,8-dihydrofolate + dTMP. It functions in the pathway pyrimidine metabolism; dTTP biosynthesis. Catalyzes the reductive methylation of 2'-deoxyuridine-5'-monophosphate (dUMP) to 2'-deoxythymidine-5'-monophosphate (dTMP) while utilizing 5,10-methylenetetrahydrofolate (mTHF) as the methyl donor and reductant in the reaction, yielding dihydrofolate (DHF) as a by-product. This enzymatic reaction provides an intracellular de novo source of dTMP, an essential precursor for DNA biosynthesis. This chain is Thymidylate synthase, found in Brevibacillus brevis (strain 47 / JCM 6285 / NBRC 100599).